Here is a 328-residue protein sequence, read N- to C-terminus: Malate dehydrogenase (328 aa).

11 to 17 (GAAGQIG) is a binding site for NAD(+). The substrate site is built by R92 and R98. Residues N105, Q112, and 129 to 131 (VGN) contribute to the NAD(+) site. Substrate-binding residues include N131 and R162. The active-site Proton acceptor is the H187.

The protein belongs to the LDH/MDH superfamily. MDH type 2 family.

It carries out the reaction (S)-malate + NAD(+) = oxaloacetate + NADH + H(+). Its function is as follows. Catalyzes the reversible oxidation of malate to oxaloacetate. This is Malate dehydrogenase from Coxiella burnetii (strain CbuK_Q154) (Coxiella burnetii (strain Q154)).